A 515-amino-acid polypeptide reads, in one-letter code: Bifunctional purine biosynthesis protein PurH (515 aa).

The MGS-like domain maps to Met1–Val145.

It belongs to the PurH family.

It catalyses the reaction (6R)-10-formyltetrahydrofolate + 5-amino-1-(5-phospho-beta-D-ribosyl)imidazole-4-carboxamide = 5-formamido-1-(5-phospho-D-ribosyl)imidazole-4-carboxamide + (6S)-5,6,7,8-tetrahydrofolate. The catalysed reaction is IMP + H2O = 5-formamido-1-(5-phospho-D-ribosyl)imidazole-4-carboxamide. It participates in purine metabolism; IMP biosynthesis via de novo pathway; 5-formamido-1-(5-phospho-D-ribosyl)imidazole-4-carboxamide from 5-amino-1-(5-phospho-D-ribosyl)imidazole-4-carboxamide (10-formyl THF route): step 1/1. The protein operates within purine metabolism; IMP biosynthesis via de novo pathway; IMP from 5-formamido-1-(5-phospho-D-ribosyl)imidazole-4-carboxamide: step 1/1. The chain is Bifunctional purine biosynthesis protein PurH from Streptococcus pyogenes serotype M2 (strain MGAS10270).